The primary structure comprises 342 residues: Erlin-1 (342 aa).

Residues 1-6 lie on the Cytoplasmic side of the membrane; it reads MAHVGA. A helical transmembrane segment spans residues 7 to 23; it reads VVAAMAGLMAILLHSSI. Topologically, residues 24–342 are lumenal; it reads HKIEEGHLAV…ASKPKASEGH (319 aa). The N-linked (GlcNAc...) asparagine glycan is linked to Asn106. A disordered region spans residues 308–342; it reads SSASRPAAGESEQLESLSMRESLKKASKPKASEGH.

This sequence belongs to the band 7/mec-2 family.

The protein localises to the endoplasmic reticulum membrane. In terms of biological role, mediates the endoplasmic reticulum-associated degradation (ERAD) of inositol 1,4,5-trisphosphate receptors (IP3Rs). Involved in regulation of cellular cholesterol homeostasis by regulation the SREBP signaling pathway. Binds cholesterol and may promote ER retention of the SCAP-SREBF complex. This Danio rerio (Zebrafish) protein is Erlin-1.